Reading from the N-terminus, the 343-residue chain is Polyprenal reductase 2 (343 aa).

A run of 6 helical transmembrane segments spans residues 12-32 (GAWI…SIPT), 66-86 (FAHF…ATWM), 164-184 (MHIL…LSLC), 223-243 (PLMK…WGWI), 266-286 (IIPY…AEIV), and 291-311 (LLIA…FVAA).

The protein belongs to the steroid 5-alpha reductase family. Polyprenal reductase subfamily. In terms of tissue distribution, expressed in roots, leaves, stems and flowers.

It is found in the endoplasmic reticulum membrane. The catalysed reaction is a di-trans,poly-cis-dolichal + NADP(+) = a di-trans,poly-cis-polyprenal + NADPH + H(+). The protein operates within protein modification; protein glycosylation. In terms of biological role, plays a key role in early steps of protein N-linked glycosylation by being involved in the conversion of polyprenol into dolichol. Acts as a polyprenal reductase that mediates the reduction of polyprenal into dolichal in a NADP-dependent mechanism. Dolichols are required for the synthesis of dolichol-linked monosaccharides and the oligosaccharide precursor used for N-glycosylation. Involved in the regulation of plant growth and reproductive processes. This chain is Polyprenal reductase 2, found in Arabidopsis thaliana (Mouse-ear cress).